A 377-amino-acid chain; its full sequence is Cytochrome c peroxidase, mitochondrial (377 aa).

A mitochondrion-targeting transit peptide spans 1–32 (MSFRAPNLIRSTVGRRAGQTLNLRSQVIRRRF). His138 serves as the catalytic Proton acceptor. Residue His261 participates in heme b binding. The active-site Tryptophan radical intermediate is the Trp277.

The protein belongs to the peroxidase family. Cytochrome c peroxidase subfamily. Forms a one-to-one complex with cytochrome c. Interacts with MID1 (via C-terminus); the interaction may contribute to cellular detoxification of radicals. Requires heme b as cofactor.

Its subcellular location is the mitochondrion matrix. The protein localises to the mitochondrion intermembrane space. The enzyme catalyses 2 Fe(II)-[cytochrome c] + H2O2 + 2 H(+) = 2 Fe(III)-[cytochrome c] + 2 H2O. Its function is as follows. Destroys radicals which are normally produced within the cells and which are toxic to biological systems. This is Cytochrome c peroxidase, mitochondrial (CCP1) from Cryptococcus neoformans var. grubii serotype A (strain H99 / ATCC 208821 / CBS 10515 / FGSC 9487) (Filobasidiella neoformans var. grubii).